The sequence spans 594 residues: Aspartate--tRNA(Asp/Asn) ligase (594 aa).

Residue Glu175 participates in L-aspartate binding. The aspartate stretch occupies residues 199–202 (QLFK). Arg221 serves as a coordination point for L-aspartate. ATP-binding positions include 221–223 (RDE) and Gln230. His446 contacts L-aspartate. Residue Glu491 coordinates ATP. Residue Arg498 participates in L-aspartate binding. 543 to 546 (GLDR) is a binding site for ATP.

Belongs to the class-II aminoacyl-tRNA synthetase family. Type 1 subfamily. Homodimer.

The protein localises to the cytoplasm. The catalysed reaction is tRNA(Asx) + L-aspartate + ATP = L-aspartyl-tRNA(Asx) + AMP + diphosphate. Functionally, aspartyl-tRNA synthetase with relaxed tRNA specificity since it is able to aspartylate not only its cognate tRNA(Asp) but also tRNA(Asn). Reaction proceeds in two steps: L-aspartate is first activated by ATP to form Asp-AMP and then transferred to the acceptor end of tRNA(Asp/Asn). The polypeptide is Aspartate--tRNA(Asp/Asn) ligase (Thermodesulfovibrio yellowstonii (strain ATCC 51303 / DSM 11347 / YP87)).